We begin with the raw amino-acid sequence, 436 residues long: Trigger factor (436 aa).

The PPIase FKBP-type domain maps to 163-248; the sequence is GDRVTVDFEG…VKKIEAAHLP (86 aa).

Belongs to the FKBP-type PPIase family. Tig subfamily.

The protein resides in the cytoplasm. It catalyses the reaction [protein]-peptidylproline (omega=180) = [protein]-peptidylproline (omega=0). Its function is as follows. Involved in protein export. Acts as a chaperone by maintaining the newly synthesized protein in an open conformation. Functions as a peptidyl-prolyl cis-trans isomerase. In Acidovorax ebreus (strain TPSY) (Diaphorobacter sp. (strain TPSY)), this protein is Trigger factor.